We begin with the raw amino-acid sequence, 217 residues long: Non-structural protein NS3 (217 aa).

The protein belongs to the orbivirus NS3 family.

May play a role in the release of virions from infected cells. This is Non-structural protein NS3 (Segment-10) from Camelus dromedarius (Dromedary).